Here is a 240-residue protein sequence, read N- to C-terminus: LexA repressor (240 aa).

Positions 26 to 46 form a DNA-binding region, H-T-H motif; that stretch reads FDEMKDALDLKSKSGIHRLIT. Residues Ser161 and Lys199 each act as for autocatalytic cleavage activity in the active site.

Belongs to the peptidase S24 family. As to quaternary structure, homodimer.

The enzyme catalyses Hydrolysis of Ala-|-Gly bond in repressor LexA.. Represses a number of genes involved in the response to DNA damage (SOS response), including recA and lexA. In the presence of single-stranded DNA, RecA interacts with LexA causing an autocatalytic cleavage which disrupts the DNA-binding part of LexA, leading to derepression of the SOS regulon and eventually DNA repair. This Methylobacterium nodulans (strain LMG 21967 / CNCM I-2342 / ORS 2060) protein is LexA repressor.